A 231-amino-acid polypeptide reads, in one-letter code: 2-C-methyl-D-erythritol 4-phosphate cytidylyltransferase (231 aa).

It belongs to the IspD/TarI cytidylyltransferase family. IspD subfamily.

It carries out the reaction 2-C-methyl-D-erythritol 4-phosphate + CTP + H(+) = 4-CDP-2-C-methyl-D-erythritol + diphosphate. The protein operates within isoprenoid biosynthesis; isopentenyl diphosphate biosynthesis via DXP pathway; isopentenyl diphosphate from 1-deoxy-D-xylulose 5-phosphate: step 2/6. Its function is as follows. Catalyzes the formation of 4-diphosphocytidyl-2-C-methyl-D-erythritol from CTP and 2-C-methyl-D-erythritol 4-phosphate (MEP). This Fusobacterium nucleatum subsp. nucleatum (strain ATCC 25586 / DSM 15643 / BCRC 10681 / CIP 101130 / JCM 8532 / KCTC 2640 / LMG 13131 / VPI 4355) protein is 2-C-methyl-D-erythritol 4-phosphate cytidylyltransferase.